The following is a 276-amino-acid chain: Large ribosomal subunit protein uL2 (276 aa).

The disordered stretch occupies residues 219-276; the sequence is TVRGSVMNPNDHPHGGGEGRAPIGRKSPMSPWGKPTLGYKTRQRNKPSDKYIVRKRKK.

Belongs to the universal ribosomal protein uL2 family. In terms of assembly, part of the 50S ribosomal subunit. Forms a bridge to the 30S subunit in the 70S ribosome.

Functionally, one of the primary rRNA binding proteins. Required for association of the 30S and 50S subunits to form the 70S ribosome, for tRNA binding and peptide bond formation. It has been suggested to have peptidyltransferase activity; this is somewhat controversial. Makes several contacts with the 16S rRNA in the 70S ribosome. The chain is Large ribosomal subunit protein uL2 from Oceanobacillus iheyensis (strain DSM 14371 / CIP 107618 / JCM 11309 / KCTC 3954 / HTE831).